The following is a 359-amino-acid chain: Dihydroorotate dehydrogenase (quinone) (359 aa).

Residues alanine 65–lysine 69 and threonine 89 contribute to the FMN site. Residue lysine 69 participates in substrate binding. Asparagine 114–phenylalanine 118 contacts substrate. Residues asparagine 149 and asparagine 182 each contribute to the FMN site. Asparagine 182 provides a ligand contact to substrate. Catalysis depends on serine 185, which acts as the Nucleophile. Substrate is bound at residue asparagine 187. FMN is bound by residues lysine 233 and threonine 261. Asparagine 262–threonine 263 provides a ligand contact to substrate. FMN-binding positions include glycine 284, glycine 313, and tyrosine 334–threonine 335.

It belongs to the dihydroorotate dehydrogenase family. Type 2 subfamily. As to quaternary structure, monomer. Requires FMN as cofactor.

Its subcellular location is the cell membrane. The enzyme catalyses (S)-dihydroorotate + a quinone = orotate + a quinol. The protein operates within pyrimidine metabolism; UMP biosynthesis via de novo pathway; orotate from (S)-dihydroorotate (quinone route): step 1/1. Its function is as follows. Catalyzes the conversion of dihydroorotate to orotate with quinone as electron acceptor. The sequence is that of Dihydroorotate dehydrogenase (quinone) from Paracidovorax citrulli (strain AAC00-1) (Acidovorax citrulli).